The sequence spans 332 residues: 2,3-diketo-L-gulonate reductase (332 aa).

The active-site Proton donor is the histidine 44. Residues 168–174 (ITMVDMS), 224–225 (WK), and 304–306 (GHE) contribute to the NAD(+) site.

This sequence belongs to the LDH2/MDH2 oxidoreductase family. DlgD subfamily. As to quaternary structure, homodimer.

It is found in the cytoplasm. It carries out the reaction 3-dehydro-L-gulonate + NAD(+) = 2,3-dioxo-L-gulonate + NADH + H(+). The enzyme catalyses 3-dehydro-L-gulonate + NADP(+) = 2,3-dioxo-L-gulonate + NADPH + H(+). Functionally, catalyzes the reduction of 2,3-diketo-L-gulonate in the presence of NADH, to form 3-keto-L-gulonate. The protein is 2,3-diketo-L-gulonate reductase of Shigella boydii serotype 4 (strain Sb227).